A 278-amino-acid chain; its full sequence is Ras-related protein Rab-40A-like (278 aa).

GTP-binding residues include glycine 26, lysine 27, and serine 28. Serine 28 serves as a coordination point for Mg(2+). The switch-I stretch occupies residues 41–49 (SPYSHLGGI). A Mg(2+)-binding site is contributed by aspartate 69. Residues glycine 72, asparagine 126, and arginine 127 each coordinate GTP. The switch-II stretch occupies residues 72–88 (GQGRFCTIFRSYSRGAQ). The SOCS box domain maps to 175–228 (LLRHRLNWLGRPSKVLSLQDLCCRTIVSCTPVHLVDKLPLPIALRSHLKSFSMA). Cysteine 270 carries the S-palmitoyl cysteine lipid modification. Cysteine 275 carries S-geranylgeranyl cysteine lipidation.

Belongs to the small GTPase superfamily. Rab family. Mg(2+) is required as a cofactor. In terms of tissue distribution, expressed in brain, lung, heart, skeletal muscle, kidney and liver. Highest expression in brain. Expressed in fetal brain and kidney.

It is found in the membrane. It localises to the cytoplasm. The protein resides in the mitochondrion. It catalyses the reaction GTP + H2O = GDP + phosphate + H(+). It functions in the pathway protein modification; protein ubiquitination. Regulated by guanine nucleotide exchange factors (GEFs) which promote the exchange of bound GDP for free GTP. Regulated by GTPase activating proteins (GAPs) which increase the GTP hydrolysis activity. Inhibited by GDP dissociation inhibitors (GDIs). May act as substrate-recognition component of the ECS(RAB40) E3 ubiquitin ligase complex which mediates the ubiquitination and subsequent proteasomal degradation of target proteins. The Rab40 subfamily belongs to the Rab family that are key regulators of intracellular membrane trafficking, from the formation of transport vesicles to their fusion with membranes. Rabs cycle between an inactive GDP-bound form and an active GTP-bound form that is able to recruit to membranes different sets of downstream effectors directly responsible for vesicle formation, movement, tethering and fusion. The sequence is that of Ras-related protein Rab-40A-like from Homo sapiens (Human).